Reading from the N-terminus, the 445-residue chain is Transcription termination factor MTERF15, mitochondrial (445 aa).

Residues methionine 1 to leucine 25 constitute a mitochondrion transit peptide.

Belongs to the mTERF family.

It localises to the mitochondrion. In terms of biological role, transcription termination factor required for mitochondrial NAD2 intron 3 splicing and normal membrane respiratory chain Complex I activity. Essential for normal plant growth and development. Binds to RNA but not to double-stranded DNA. This chain is Transcription termination factor MTERF15, mitochondrial, found in Arabidopsis thaliana (Mouse-ear cress).